A 354-amino-acid polypeptide reads, in one-letter code: Peptide chain release factor 1 (354 aa).

Position 233 is an N5-methylglutamine (Gln233).

The protein belongs to the prokaryotic/mitochondrial release factor family. Post-translationally, methylated by PrmC. Methylation increases the termination efficiency of RF1.

The protein localises to the cytoplasm. Functionally, peptide chain release factor 1 directs the termination of translation in response to the peptide chain termination codons UAG and UAA. In Clostridioides difficile (strain 630) (Peptoclostridium difficile), this protein is Peptide chain release factor 1.